A 413-amino-acid polypeptide reads, in one-letter code: Serine/threonine-protein kinase SSN3 (413 aa).

The Protein kinase domain maps to 26–355 (YHIVGFISSG…AQEALEHPYF (330 aa)). ATP is bound by residues 32-40 (ISSGTYGRV) and K56. Residue D158 is the Proton acceptor of the active site. Positions 376 to 385 (RRVTQDDNDI) are enriched in basic and acidic residues. Residues 376-413 (RRVTQDDNDIRSGSLPGTKRSGLPDDSLMGRASKRLKE) are disordered.

The protein belongs to the protein kinase superfamily. CMGC Ser/Thr protein kinase family. CDC2/CDKX subfamily. Component of the srb8-11 complex, a regulatory module of the Mediator complex. The cofactor is Mg(2+).

It is found in the nucleus. The catalysed reaction is L-seryl-[protein] + ATP = O-phospho-L-seryl-[protein] + ADP + H(+). It catalyses the reaction L-threonyl-[protein] + ATP = O-phospho-L-threonyl-[protein] + ADP + H(+). The enzyme catalyses [DNA-directed RNA polymerase] + ATP = phospho-[DNA-directed RNA polymerase] + ADP + H(+). Its function is as follows. Component of the srb8-11 complex. The srb8-11 complex is a regulatory module of the Mediator complex which is itself involved in regulation of basal and activated RNA polymerase II-dependent transcription. The srb8-11 complex may be involved in the transcriptional repression of a subset of genes regulated by Mediator. It may inhibit the association of the Mediator complex with RNA polymerase II to form the holoenzyme complex. The srb8-11 complex phosphorylates the C-terminal domain (CTD) of the largest subunit of RNA polymerase II. This chain is Serine/threonine-protein kinase SSN3 (ssn3), found in Aspergillus oryzae (strain ATCC 42149 / RIB 40) (Yellow koji mold).